A 573-amino-acid chain; its full sequence is Urease subunit alpha (573 aa).

A Urease domain is found at glycine 136–phenylalanine 573. Ni(2+) is bound by residues histidine 141, histidine 143, and lysine 224. Lysine 224 is subject to N6-carboxylysine. Histidine 226 provides a ligand contact to substrate. The Ni(2+) site is built by histidine 253 and histidine 279. Histidine 327 acts as the Proton donor in catalysis. Ni(2+) is bound at residue aspartate 367.

It belongs to the metallo-dependent hydrolases superfamily. Urease alpha subunit family. As to quaternary structure, heterotrimer of UreA (gamma), UreB (beta) and UreC (alpha) subunits. Three heterotrimers associate to form the active enzyme. Ni cation is required as a cofactor. Carboxylation allows a single lysine to coordinate two nickel ions.

The protein localises to the cytoplasm. It catalyses the reaction urea + 2 H2O + H(+) = hydrogencarbonate + 2 NH4(+). It functions in the pathway nitrogen metabolism; urea degradation; CO(2) and NH(3) from urea (urease route): step 1/1. The polypeptide is Urease subunit alpha (Mycolicibacterium vanbaalenii (strain DSM 7251 / JCM 13017 / BCRC 16820 / KCTC 9966 / NRRL B-24157 / PYR-1) (Mycobacterium vanbaalenii)).